Consider the following 519-residue polypeptide: Probable cytosol aminopeptidase (519 aa).

Mn(2+) is bound by residues K283 and D288. K295 is an active-site residue. 3 residues coordinate Mn(2+): D306, D365, and E367. The active site involves R369.

The protein belongs to the peptidase M17 family. The cofactor is Mn(2+).

Its subcellular location is the cytoplasm. It catalyses the reaction Release of an N-terminal amino acid, Xaa-|-Yaa-, in which Xaa is preferably Leu, but may be other amino acids including Pro although not Arg or Lys, and Yaa may be Pro. Amino acid amides and methyl esters are also readily hydrolyzed, but rates on arylamides are exceedingly low.. The enzyme catalyses Release of an N-terminal amino acid, preferentially leucine, but not glutamic or aspartic acids.. In terms of biological role, presumably involved in the processing and regular turnover of intracellular proteins. Catalyzes the removal of unsubstituted N-terminal amino acids from various peptides. This is Probable cytosol aminopeptidase from Mycobacterium marinum (strain ATCC BAA-535 / M).